The primary structure comprises 242 residues: Segregation and condensation protein A (242 aa).

This sequence belongs to the ScpA family. In terms of assembly, component of a cohesin-like complex composed of ScpA, ScpB and the Smc homodimer, in which ScpA and ScpB bind to the head domain of Smc. The presence of the three proteins is required for the association of the complex with DNA.

The protein localises to the cytoplasm. In terms of biological role, participates in chromosomal partition during cell division. May act via the formation of a condensin-like complex containing Smc and ScpB that pull DNA away from mid-cell into both cell halves. The polypeptide is Segregation and condensation protein A (Streptococcus mitis).